The primary structure comprises 631 residues: Chaperone protein HtpG (631 aa).

Residues 1–339 (MSAQKETLGF…SNDLPLNVSR (339 aa)) form an a; substrate-binding region. Positions 340–556 (EILQESKDID…EHDMSAHLER (217 aa)) are b. The tract at residues 557–631 (MLKAAGQKIE…INKLMLELSV (75 aa)) is c.

Belongs to the heat shock protein 90 family. In terms of assembly, homodimer.

Its subcellular location is the cytoplasm. Functionally, molecular chaperone. Has ATPase activity. This chain is Chaperone protein HtpG, found in Chromobacterium violaceum (strain ATCC 12472 / DSM 30191 / JCM 1249 / CCUG 213 / NBRC 12614 / NCIMB 9131 / NCTC 9757 / MK).